Consider the following 193-residue polypeptide: Potassium-transporting ATPase KdpC subunit (193 aa).

Residues 7–27 (PMIVIFAVLAALTGLAYPAVM) form a helical membrane-spanning segment.

The protein belongs to the KdpC family. As to quaternary structure, the system is composed of three essential subunits: KdpA, KdpB and KdpC.

Its subcellular location is the cell inner membrane. Its function is as follows. Part of the high-affinity ATP-driven potassium transport (or Kdp) system, which catalyzes the hydrolysis of ATP coupled with the electrogenic transport of potassium into the cytoplasm. This subunit acts as a catalytic chaperone that increases the ATP-binding affinity of the ATP-hydrolyzing subunit KdpB by the formation of a transient KdpB/KdpC/ATP ternary complex. This is Potassium-transporting ATPase KdpC subunit from Paraburkholderia phymatum (strain DSM 17167 / CIP 108236 / LMG 21445 / STM815) (Burkholderia phymatum).